We begin with the raw amino-acid sequence, 909 residues long: Myb-like protein Q (909 aa).

3 disordered regions span residues 15 to 65 (TTNN…QQQQ), 84 to 149 (QQQN…QQIL), and 216 to 280 (SAPS…KGPW). Low complexity predominate over residues 17 to 46 (NNNSNNNNNNNNNNNNNNNNNNNNNINQNH). Residues 47-56 (QHQHQHHHHQ) show a composition bias toward basic residues. Residues 84–126 (QQQNYGESTTSTSMIPPSITTSLTPLTPTLSSQPQNIQQQQQQ) are compositionally biased toward low complexity. Over residues 127-139 (QHHHQQQHHHHHQ) the composition is skewed to basic residues. Polar residues predominate over residues 216-226 (SAPSTPLSMSP). HTH myb-type domains follow at residues 272 to 327 (SPGI…SPEV) and 328 to 378 (RKTN…LKKI). 2 consecutive DNA-binding regions (H-T-H motif) follow at residues 300 to 323 (WSSI…FNHL) and 351 to 374 (WTAI…NSTL). Residues 379 to 389 (GGDSKSLNKEK) show a composition bias toward basic and acidic residues. Disordered regions lie at residues 379–482 (GGDS…NTAI), 497–531 (QTTP…QTQQ), 616–642 (SMEQ…QQQQ), 672–748 (YQQQ…HPIE), and 826–855 (LNTT…IPTP). Positions 390–401 (DDDDDDDEDAED) are enriched in acidic residues. Composition is skewed to low complexity over residues 415–431 (SSSS…TNSS) and 444–482 (STTT…NTAI). Polar residues predominate over residues 497 to 508 (QTTPNSSPSLSS). Low complexity-rich tracts occupy residues 622–642 (YQQQ…QQQQ), 672–726 (YQQQ…QQQQ), 733–744 (NSNNTDTTFSNS), and 826–851 (LNTT…NNNN).

The protein localises to the nucleus. The polypeptide is Myb-like protein Q (mybQ) (Dictyostelium discoideum (Social amoeba)).